The primary structure comprises 103 residues: MAAVTLNVSTLKPLGDRVLVKIAQQDEKTAGGIFLPDTAKEKPQVGEVVAVGPGKRNDEGKLIPMELKAGDRVLYSKYAGTEVKLGSDEYVLLAERDILAIVQ.

It belongs to the GroES chaperonin family. As to quaternary structure, heptamer of 7 subunits arranged in a ring. Interacts with the chaperonin GroEL.

It localises to the cytoplasm. Together with the chaperonin GroEL, plays an essential role in assisting protein folding. The GroEL-GroES system forms a nano-cage that allows encapsulation of the non-native substrate proteins and provides a physical environment optimized to promote and accelerate protein folding. GroES binds to the apical surface of the GroEL ring, thereby capping the opening of the GroEL channel. In Synechococcus sp. (strain JA-3-3Ab) (Cyanobacteria bacterium Yellowstone A-Prime), this protein is Co-chaperonin GroES.